A 155-amino-acid chain; its full sequence is Ribosomal RNA large subunit methyltransferase H (155 aa).

S-adenosyl-L-methionine is bound by residues Leu-72, Gly-103, and 122–127 (LSPLTF).

It belongs to the RNA methyltransferase RlmH family. Homodimer.

Its subcellular location is the cytoplasm. It catalyses the reaction pseudouridine(1915) in 23S rRNA + S-adenosyl-L-methionine = N(3)-methylpseudouridine(1915) in 23S rRNA + S-adenosyl-L-homocysteine + H(+). Functionally, specifically methylates the pseudouridine at position 1915 (m3Psi1915) in 23S rRNA. The sequence is that of Ribosomal RNA large subunit methyltransferase H from Alkalilimnicola ehrlichii (strain ATCC BAA-1101 / DSM 17681 / MLHE-1).